The sequence spans 150 residues: MAQVEEKIQVKEALDLIEEVFDNLEDLVFNVEEKVRHNPNIPYLYDFIDSLYKVVGTTKSIIEYIMDNIQPQDIYSTLDFYRSWLAYIQRLLYANLKDLNMTENVMGTVTYIIANLYKSFREFKKNNENRQNKVEGIVLNPNTPIPTREL.

This is an uncharacterized protein from Acidianus bottle-shaped virus (isolate Italy/Pozzuoli) (ABV).